Here is a 26-residue protein sequence, read N- to C-terminus: Small toxic protein ShoB (26 aa).

A helical membrane pass occupies residues 7-24; that stretch reads LIKRVIKIIIAVLQLILL.

The protein localises to the membrane. In terms of biological role, toxic component of a type I toxin-antitoxin (TA) system. May be a toxic protein; overexpression causes cessation of growth and rapid membrane depolarization. Overexpression induces stress-response and a number of membrane protein genes. This chain is Small toxic protein ShoB (shoB), found in Escherichia coli (strain K12).